A 64-amino-acid chain; its full sequence is Large ribosomal subunit protein bL28 (64 aa).

Residues 1–26 (MARRDQLTGKGPLSGNTRSHAMNHSK) are disordered.

The protein belongs to the bacterial ribosomal protein bL28 family.

The polypeptide is Large ribosomal subunit protein bL28 (Ureaplasma urealyticum serovar 10 (strain ATCC 33699 / Western)).